Here is a 61-residue protein sequence, read N- to C-terminus: Temporin-SN2 (61 aa).

Residues 1-22 form the signal peptide; that stretch reads MFTLKKTLLLLFFLGTINLSLC. Residues 23–44 constitute a propeptide, removed in mature form; it reads EEERNAEEERRDGDDEMDVEVK. The residue at position 61 (Lys61) is a Lysine amide.

The protein belongs to the frog skin active peptide (FSAP) family. Temporin subfamily. In terms of tissue distribution, expressed by the skin glands.

It is found in the secreted. Antimicrobial peptide. Active against some Gram-positive and Gram-negative bacterial strains. Active against fungus C.glabrata 090902 but not against C.albicans ATCC 12231. Shows very weak hemolytic activity against human erythrocytes. In Sylvirana spinulosa (Fine-spined frog), this protein is Temporin-SN2.